A 477-amino-acid chain; its full sequence is PTS system MurNAc-GlcNAc-specific EIIBC component (477 aa).

The region spanning Gln-5–Glu-87 is the PTS EIIB type-1 domain. The active-site Phosphocysteine intermediate; for EIIB activity is Cys-27. The tract at residues His-91–Arg-113 is disordered. Polar residues predominate over residues Arg-92 to Gln-104. The PTS EIIC type-1 domain maps to Lys-123–Asp-477. 10 helical membrane passes run Ile-128–Val-148, Val-167–Phe-187, Val-192–Ile-212, Leu-227–Ile-247, Ile-267–Ile-287, Val-298–Val-318, Leu-342–Val-362, Ala-377–Leu-397, Phe-401–Ile-421, and Leu-443–Phe-463.

Its subcellular location is the cell membrane. It carries out the reaction N-acetyl-beta-D-muramate-(1-&gt;4)-N-acetyl-D-glucosamine(out) + N(pros)-phospho-L-histidyl-[protein] = 6-phospho-N-acetyl-beta-D-muramate-(1-&gt;4)-N-acetyl-D-glucosamine(in) + L-histidyl-[protein]. It participates in cell wall biogenesis; peptidoglycan recycling. Functionally, the phosphoenolpyruvate-dependent sugar phosphotransferase system (sugar PTS), a major carbohydrate active transport system, catalyzes the phosphorylation of incoming sugar substrates concomitantly with their translocation across the cell membrane. This system is involved in the uptake and phosphorylation of MurNAc-GlcNAc, the principle peptidoglycan turnover product of S.aureus, yielding cytoplasmic MurNAc 6P-GlcNAc. In Staphylococcus haemolyticus (strain JCSC1435), this protein is PTS system MurNAc-GlcNAc-specific EIIBC component.